The sequence spans 83 residues: RNA-binding protein Hfq (83 aa).

The 61-residue stretch at 11 to 71 (DTFLNFVRKN…ISTIMPGQPI (61 aa)) folds into the Sm domain.

This sequence belongs to the Hfq family. In terms of assembly, homohexamer.

Functionally, RNA chaperone that binds small regulatory RNA (sRNAs) and mRNAs to facilitate mRNA translational regulation in response to envelope stress, environmental stress and changes in metabolite concentrations. Also binds with high specificity to tRNAs. The polypeptide is RNA-binding protein Hfq (Methylocella silvestris (strain DSM 15510 / CIP 108128 / LMG 27833 / NCIMB 13906 / BL2)).